We begin with the raw amino-acid sequence, 267 residues long: 4-hydroxy-tetrahydrodipicolinate reductase (267 aa).

NAD(+) is bound by residues 8–13 and Glu-34; that span reads GAAGRM. Arg-35 lines the NADP(+) pocket. NAD(+) contacts are provided by residues 98–100 and 122–125; these read GST and APNM. His-155 (proton donor/acceptor) is an active-site residue. His-156 is a binding site for (S)-2,3,4,5-tetrahydrodipicolinate. Lys-159 functions as the Proton donor in the catalytic mechanism. 165–166 contributes to the (S)-2,3,4,5-tetrahydrodipicolinate binding site; it reads GT.

It belongs to the DapB family.

It localises to the cytoplasm. The enzyme catalyses (S)-2,3,4,5-tetrahydrodipicolinate + NAD(+) + H2O = (2S,4S)-4-hydroxy-2,3,4,5-tetrahydrodipicolinate + NADH + H(+). It catalyses the reaction (S)-2,3,4,5-tetrahydrodipicolinate + NADP(+) + H2O = (2S,4S)-4-hydroxy-2,3,4,5-tetrahydrodipicolinate + NADPH + H(+). Its pathway is amino-acid biosynthesis; L-lysine biosynthesis via DAP pathway; (S)-tetrahydrodipicolinate from L-aspartate: step 4/4. In terms of biological role, catalyzes the conversion of 4-hydroxy-tetrahydrodipicolinate (HTPA) to tetrahydrodipicolinate. The sequence is that of 4-hydroxy-tetrahydrodipicolinate reductase from Geotalea daltonii (strain DSM 22248 / JCM 15807 / FRC-32) (Geobacter daltonii).